The sequence spans 158 residues: Flagellar assembly factor FliW (158 aa).

The protein belongs to the FliW family. In terms of assembly, interacts with translational regulator CsrA and flagellin(s).

The protein localises to the cytoplasm. Its function is as follows. Acts as an anti-CsrA protein, binds CsrA and prevents it from repressing translation of its target genes, one of which is flagellin. Binds to flagellin and participates in the assembly of the flagellum. In Syntrophus aciditrophicus (strain SB), this protein is Flagellar assembly factor FliW.